Here is a 333-residue protein sequence, read N- to C-terminus: Calcium uniporter protein, mitochondrial (333 aa).

The N-terminal 22 residues, 1 to 22 (MRNGRCLVTPFVTAQRLANLRN), are a transit peptide targeting the mitochondrion. Residues 23–214 (TLWNRQQIAF…QECEAHTDRV (192 aa)) are Mitochondrial matrix-facing. The stretch at 180–193 (KKLLLQLENAETLL) forms a coiled coil. An outer juxtamembrane helix (OJMH) region spans residues 195-213 (PLHDAKRKIEQECEAHTDR). The helical transmembrane segment at 215–234 (MWAGFAAMGVQTGLFARLTW) threads the bilayer. The Mitochondrial intermembrane portion of the chain corresponds to 235-243 (WEYSWDIME). Residues 239-247 (WDIMEPVTY) carry the Selectivity filter motif. A Ca(2+)-binding site is contributed by glutamate 243. A helical transmembrane segment spans residues 244 to 260 (PVTYFATYSTVCATFGY). The Mitochondrial matrix segment spans residues 261–333 (YLYTQQSFEY…SYLSNLEAEK (73 aa)). The inner juxtamembrane helix (IJMH) stretch occupies residues 262 to 271 (LYTQQSFEYP). The stretch at 289-316 (QNFDIEKYNRLVTEVDELRNQLKRMRDP) forms a coiled coil.

It belongs to the MCU (TC 1.A.77) family.

The protein localises to the mitochondrion inner membrane. The enzyme catalyses Ca(2+)(in) = Ca(2+)(out). Inhibited by ruthenium red or its derivative Ru360; possibly by obstructing the pore. Functionally, mitochondrial inner membrane calcium uniporter that mediates calcium uptake into mitochondria. Constitutes a pore-forming and calcium-conducting subunit. Mitochondrial calcium homeostasis plays key roles in cellular physiology and regulates cell bioenergetics, cytoplasmic calcium signals and activation of cell death pathways. Required for rapid mitochondrial calcium uptake and mitochondrial reactive oxygen species (mtROS) production after wounding. In addition, together with mitochondrial calcium regulator micu-1, required for mitochondrial calcium uptake following axon injury in PLM touch receptor neurons. This Caenorhabditis elegans protein is Calcium uniporter protein, mitochondrial.